The following is a 693-amino-acid chain: Periplasmic alpha-galactoside-binding protein (693 aa).

A signal peptide spans 1–20 (MKTHRLNMTASLLIGISAFA).

This sequence belongs to the bacterial solute-binding protein 5 family.

The protein localises to the periplasm. Its function is as follows. Involved in the transport of alpha-galactosides. Required for the utilization of raffinose and melibiose. Probably acts as a periplasmic substrate-binding protein for a transport system. This is Periplasmic alpha-galactoside-binding protein from Rhizobium meliloti (strain 1021) (Ensifer meliloti).